Consider the following 213-residue polypeptide: MRHKAHPGPDLELECALLRSNRAIKTLCGVDEAGRGPLCGPVVAAAVVLDLDNLPVGLNDSKQLSAKKREQLFEQIYVTSQVGVGEASVAEIDALNILHASMLAMVRAVTALQGRLVVDHALIDGNRVPATLPVPGQAVVKGDAKSLSIAAASIIAKVTRDRIMAELDRDYPHYGWAKSQGYPTQAHLQALALHGVTPHHRRSFKPVKQLLPH.

An RNase H type-2 domain is found at 25-213; it reads KTLCGVDEAG…FKPVKQLLPH (189 aa). A divalent metal cation-binding residues include Asp31, Glu32, and Asp124.

Belongs to the RNase HII family. Requires Mn(2+) as cofactor. Mg(2+) is required as a cofactor.

It localises to the cytoplasm. The enzyme catalyses Endonucleolytic cleavage to 5'-phosphomonoester.. Its function is as follows. Endonuclease that specifically degrades the RNA of RNA-DNA hybrids. This is Ribonuclease HII from Magnetococcus marinus (strain ATCC BAA-1437 / JCM 17883 / MC-1).